The sequence spans 677 residues: Methionine--tRNA ligase (677 aa).

Positions 14-24 (PYANGAIHLGH) match the 'HIGH' region motif. Zn(2+) is bound by residues Cys145, Cys148, Cys158, and Cys161. The 'KMSKS' region signature appears at 330–334 (KMSKS). Position 333 (Lys333) interacts with ATP. Positions 576–677 (DFAKVDLRVA…EGALPGMRVM (102 aa)) constitute a tRNA-binding domain.

Belongs to the class-I aminoacyl-tRNA synthetase family. MetG type 1 subfamily. As to quaternary structure, homodimer. Requires Zn(2+) as cofactor.

Its subcellular location is the cytoplasm. The catalysed reaction is tRNA(Met) + L-methionine + ATP = L-methionyl-tRNA(Met) + AMP + diphosphate. Its function is as follows. Is required not only for elongation of protein synthesis but also for the initiation of all mRNA translation through initiator tRNA(fMet) aminoacylation. The chain is Methionine--tRNA ligase from Saccharophagus degradans (strain 2-40 / ATCC 43961 / DSM 17024).